Consider the following 80-residue polypeptide: Protein UL148B (80 aa).

Residues 10–30 (AICVGLVMGVTVIASCALLVF) form a helical membrane-spanning segment.

It localises to the host membrane. This Homo sapiens (Human) protein is Protein UL148B (UL148B).